A 210-amino-acid chain; its full sequence is Protein GrpE (210 aa).

A compositionally biased stretch (basic and acidic residues) spans 1 to 12; sequence MSDQAKDERAPS. Disordered stretches follow at residues 1–26 and 191–210; these read MSDQ…RTEG and IAAE…EKDA.

This sequence belongs to the GrpE family. As to quaternary structure, homodimer.

The protein localises to the cytoplasm. In terms of biological role, participates actively in the response to hyperosmotic and heat shock by preventing the aggregation of stress-denatured proteins, in association with DnaK and GrpE. It is the nucleotide exchange factor for DnaK and may function as a thermosensor. Unfolded proteins bind initially to DnaJ; upon interaction with the DnaJ-bound protein, DnaK hydrolyzes its bound ATP, resulting in the formation of a stable complex. GrpE releases ADP from DnaK; ATP binding to DnaK triggers the release of the substrate protein, thus completing the reaction cycle. Several rounds of ATP-dependent interactions between DnaJ, DnaK and GrpE are required for fully efficient folding. The chain is Protein GrpE from Mesorhizobium japonicum (strain LMG 29417 / CECT 9101 / MAFF 303099) (Mesorhizobium loti (strain MAFF 303099)).